The chain runs to 123 residues: MEMSLRVALFFAFWVCLTTGSLNEICYQEKVVGNCGSQLYPYYFNSQSGKCERFMYTGCGKNDNNFGYLFECERTCPGDLDLGDVCSLEPEGGHCRAYFIKYFFNATSGMCEKFVYGGCGGNV.

The first 20 residues, 1 to 20 (MEMSLRVALFFAFWVCLTTG), serve as a signal peptide directing secretion. BPTI/Kunitz inhibitor domains follow at residues 26 to 76 (CYQE…ERTC) and 86 to 123 (CSLE…GGNV). Disulfide bonds link C26–C76, C35–C59, C51–C72, C86–C111, and C95–C119.

The protein belongs to the venom Kunitz-type family. 02 (native) subfamily. As to expression, expressed by the venom gland.

It localises to the secreted. Dual-function toxin that inhibits both serine proteases and voltage-gated potassium channels (Kv). In Hadronyche infensa (Fraser island funnel-web spider), this protein is U13-hexatoxin-Hi1a.